Consider the following 674-residue polypeptide: Kinesin-like protein KIFC1 (674 aa).

A phosphoserine mark is found at serine 28, serine 33, and serine 35. A disordered region spans residues 66–96; it reads TSRPRGPLLSTVSQTQGHTAAQKGPKKTGPR. The segment covering 75–84 has biased composition (polar residues); the sequence is STVSQTQGHT. Residues 146 to 315 adopt a coiled-coil conformation; that stretch reads DLNEELKRYR…QELKGNIRVF (170 aa). One can recognise a Kinesin motor domain in the interval 311-664; the sequence is NIRVFCRVRP…LRFASKVNQC (354 aa). The tract at residues 327 to 366 is disordered; the sequence is TPSPGFLVFPPGPAGPSDPPTGLSLSRSDDRRSTLTGAPA. Residues 336–345 show a composition bias toward pro residues; it reads PPGPAGPSDP. Threonine 360 carries the post-translational modification Phosphothreonine. 411-418 is a binding site for ATP; it reads GQTGSGKT.

Belongs to the TRAFAC class myosin-kinesin ATPase superfamily. Kinesin family. NCD subfamily. Binds NUBP1 and NUBP2. Interacts with PPP1R42. As to expression, highly expressed in 14 dpc embryos, spleen and NIH3T3 cells. Also expressed in testis, brain, lung, kidney and cultured astrocytes. Very low levels in skeletal muscle and heart.

The protein resides in the nucleus. It localises to the cytoplasm. It is found in the cytoskeleton. Its subcellular location is the microtubule organizing center. The protein localises to the centrosome. The protein resides in the spindle. It localises to the early endosome. Its function is as follows. Minus end-directed microtubule-dependent motor required for bipolar spindle formation. May contribute to movement of early endocytic vesicles. Regulates cilium formation and structure. This chain is Kinesin-like protein KIFC1, found in Mus musculus (Mouse).